The sequence spans 67 residues: Large ribosomal subunit protein bL31 (67 aa).

This sequence belongs to the bacterial ribosomal protein bL31 family. Type A subfamily. In terms of assembly, part of the 50S ribosomal subunit.

Its function is as follows. Binds the 23S rRNA. The protein is Large ribosomal subunit protein bL31 of Wolinella succinogenes (strain ATCC 29543 / DSM 1740 / CCUG 13145 / JCM 31913 / LMG 7466 / NCTC 11488 / FDC 602W) (Vibrio succinogenes).